Consider the following 267-residue polypeptide: Sepiapterin reductase (267 aa).

Met-1 carries the N-acetylmethionine modification. Residue 20–26 (GASRGFG) coordinates NADP(+). Ser-38 carries the phosphoserine modification. Residues 48–49 (RN) and 75–76 (DL) each bind NADP(+). Residues 163–164 (SI) and Tyr-176 contribute to the substrate site. NADP(+) is bound at residue Lys-180. Position 201 is a phosphoserine (Ser-201). Gly-205 provides a ligand contact to substrate. 207–212 (LDTDMQ) lines the NADP(+) pocket. Ser-219 carries the post-translational modification Phosphoserine. Asp-263 is a binding site for substrate.

The protein belongs to the sepiapterin reductase family. As to quaternary structure, homodimer.

Its subcellular location is the cytoplasm. It catalyses the reaction L-erythro-7,8-dihydrobiopterin + NADP(+) = L-sepiapterin + NADPH + H(+). The enzyme catalyses (6R)-L-erythro-5,6,7,8-tetrahydrobiopterin + 2 NADP(+) = 6-pyruvoyl-5,6,7,8-tetrahydropterin + 2 NADPH + 2 H(+). Functionally, catalyzes the final one or two reductions in tetra-hydrobiopterin biosynthesis to form 5,6,7,8-tetrahydrobiopterin. The sequence is that of Sepiapterin reductase (SPR) from Bos taurus (Bovine).